The primary structure comprises 180 residues: Transcriptional repressor NrdR (180 aa).

A zinc finger lies at 3 to 34 (CPRCSKQEIRVLESRSAEGGQSVRRRRECMSC). The region spanning 49–139 (IMVIKRDGSR…VYRQFQGIKD (91 aa)) is the ATP-cone domain. The disordered stretch occupies residues 155–180 (LERLLQDSSASDSESSGSPDLVGEYS). Residues 160–174 (QDSSASDSESSGSPD) show a composition bias toward low complexity.

It belongs to the NrdR family. Zn(2+) is required as a cofactor.

Its function is as follows. Negatively regulates transcription of bacterial ribonucleotide reductase nrd genes and operons by binding to NrdR-boxes. This chain is Transcriptional repressor NrdR, found in Synechococcus sp. (strain JA-2-3B'a(2-13)) (Cyanobacteria bacterium Yellowstone B-Prime).